A 319-amino-acid polypeptide reads, in one-letter code: Transmembrane protein 121 (319 aa).

Transmembrane regions (helical) follow at residues 10-30 (HVCL…AYLV), 43-63 (IIVL…AVWV), 74-94 (YAMI…YFIF), 112-132 (ALTL…VALD), 150-170 (LFWV…LWEP), 174-194 (GLPL…LLVL), and 214-234 (MMLY…LARA). Residues 277-306 (PALSLELQPPPPQRNSVPPPPPPLHGPPGR) show a composition bias toward pro residues. Residues 277 to 319 (PALSLELQPPPPQRNSVPPPPPPLHGPPGRPHMSSPTRDPLDT) form a disordered region.

It belongs to the TMEM121 family. As to expression, highly expressed in heart and detected in pancreas, liver and skeletal muscle.

The protein localises to the membrane. Its function is as follows. May play a role in MAPK signaling. This chain is Transmembrane protein 121 (TMEM121), found in Homo sapiens (Human).